The chain runs to 428 residues: Peptidase B (428 aa).

Mn(2+)-binding residues include K195 and D200. K207 is a catalytic residue. Mn(2+) is bound by residues D218, D277, and E279. R281 is a catalytic residue.

Belongs to the peptidase M17 family. Homohexamer. Mn(2+) serves as cofactor.

It is found in the cytoplasm. It carries out the reaction Release of an N-terminal amino acid, Xaa, from a peptide or arylamide. Xaa is preferably Glu or Asp but may be other amino acids, including Leu, Met, His, Cys and Gln.. Probably plays an important role in intracellular peptide degradation. The protein is Peptidase B of Enterobacter sp. (strain 638).